A 114-amino-acid chain; its full sequence is uncharacterized protein (114 aa).

Residues 18-29 are compositionally biased toward basic residues; that stretch reads TRKRNSHKKVTK. 2 disordered regions span residues 18–47 and 65–108; these read TRKR…RRTG and SRPR…KLLN. A compositionally biased stretch (basic and acidic residues) spans 30–41; sequence RAVEKRKQDSTR.

This is an uncharacterized protein from Homo sapiens (Human).